Reading from the N-terminus, the 72-residue chain is MTKKAKNVEKIPFEDAMKRLEEIIDLMNQPTTSLEASLTLYEEADQLMRICESHIQEVEARIKQLSDQRSES.

This sequence belongs to the XseB family. In terms of assembly, heterooligomer composed of large and small subunits.

It is found in the cytoplasm. It catalyses the reaction Exonucleolytic cleavage in either 5'- to 3'- or 3'- to 5'-direction to yield nucleoside 5'-phosphates.. Its function is as follows. Bidirectionally degrades single-stranded DNA into large acid-insoluble oligonucleotides, which are then degraded further into small acid-soluble oligonucleotides. The chain is Exodeoxyribonuclease 7 small subunit from Chlamydia trachomatis serovar A (strain ATCC VR-571B / DSM 19440 / HAR-13).